Reading from the N-terminus, the 549-residue chain is Alpha-amylase (549 aa).

The first 34 residues, 1–34 (MLTFHRIIRKGWMFLLAFLLTALLFCPTGQPAKA), serve as a signal peptide directing secretion. Residues D139, D196, A218, D220, D231, and D237 each contribute to the Ca(2+) site. Residue D196 participates in Na(+) binding. Na(+) is bound by residues D220, D231, D237, and L238. Ca(2+) is bound at residue D239. The Nucleophile role is filled by D268. Residue H272 coordinates Ca(2+). Residue E298 is the Proton donor of the active site. Residues G337, F339, S440, D441, and D464 each coordinate Ca(2+).

It belongs to the glycosyl hydrolase 13 family. Monomer. It depends on Ca(2+) as a cofactor. The cofactor is Na(+).

The protein resides in the secreted. It carries out the reaction Endohydrolysis of (1-&gt;4)-alpha-D-glucosidic linkages in polysaccharides containing three or more (1-&gt;4)-alpha-linked D-glucose units.. In Geobacillus stearothermophilus (Bacillus stearothermophilus), this protein is Alpha-amylase (amyS).